Here is a 161-residue protein sequence, read N- to C-terminus: Eukaryotic translation initiation factor 5A-1 (161 aa).

A compositionally biased stretch (basic and acidic residues) spans 1 to 12; that stretch reads MSDEEHQFESKA. The interval 1 to 21 is disordered; it reads MSDEEHQFESKADAGASKTYP. The residue at position 52 (K52) is a Hypusine.

The protein belongs to the eIF-5A family. In terms of processing, lys-52 undergoes hypusination, a unique post-translational modification that consists in the addition of a butylamino group from spermidine to lysine side chain, leading to the formation of the unusual amino acid hypusine. eIF-5As are the only known proteins to undergo this modification, which is essential for their function.

Its function is as follows. Translation factor that promotes translation elongation and termination, particularly upon ribosome stalling at specific amino acid sequence contexts. Binds between the exit (E) and peptidyl (P) site of the ribosome and promotes rescue of stalled ribosome: specifically required for efficient translation of polyproline-containing peptides as well as other motifs that stall the ribosome. Acts as a ribosome quality control (RQC) cofactor by joining the RQC complex to facilitate peptidyl transfer during CAT tailing step. This Medicago sativa (Alfalfa) protein is Eukaryotic translation initiation factor 5A-1.